Reading from the N-terminus, the 771-residue chain is Choline transporter-like protein 1 (771 aa).

The chain crosses the membrane as a helical span at residues 96-116 (FLFFVFLCGWVVVAGFGIMWG). 2 N-linked (GlcNAc...) asparagine glycosylation sites follow: N141 and N259. Helical transmembrane passes span 312–332 (WWQTLILIFAAGILSFIWTVI), 335–355 (LLGSLIIWLSILIVLVALGFG), 392–412 (LVVAIATSVLLLIFLLVILFI), and 441–461 (LFPFLLHIGVFALWGSIAIWL). A glycan (N-linked (GlcNAc...) asparagine) is linked at N480. A run of 5 helical transmembrane segments spans residues 514-534 (LFAFFWLSCFVTALGDIALAG), 566-586 (LGSIAFGSLIIAIVKIIRVLL), 603-623 (WFLMCLKCCFWCLEVFFKFLT), 662-682 (AGILLFLGKSMITLGMGILSF), and 701-721 (YYFVPIVIVVIGSYFMADLFF).

The protein belongs to the CTL (choline transporter-like) family.

It is found in the membrane. The chain is Choline transporter-like protein 1 (chtl-1) from Caenorhabditis elegans.